Reading from the N-terminus, the 226-residue chain is V-type proton ATPase subunit E 1 (226 aa).

Ala2 is modified (N-acetylalanine). A Phosphotyrosine modification is found at Tyr56.

The protein belongs to the V-ATPase E subunit family. V-ATPase is a heteromultimeric enzyme made up of two complexes: the ATP-hydrolytic V1 complex and the proton translocation V0 complex. The V1 complex consists of three catalytic AB heterodimers that form a heterohexamer, three peripheral stalks each consisting of EG heterodimers, one central rotor including subunits D and F, and the regulatory subunits C and H. The proton translocation complex V0 consists of the proton transport subunit a, a ring of proteolipid subunits c9c'', rotary subunit d, subunits e and f, and the accessory subunits ATP6AP1/Ac45 and ATP6AP2/PRR. Interacts with RABL2/RABL2A; binds preferentially to GTP-bound RABL2. Interacts with ALDOC. Interacts with RAB11B. As to expression, kidney; localizes to early distal nephron, encompassing thick ascending limbs and distal convoluted tubules (at protein level). Ubiquitous. High expression in the skin.

The protein resides in the apical cell membrane. It localises to the cytoplasmic vesicle. Its subcellular location is the secretory vesicle. The protein localises to the synaptic vesicle membrane. It is found in the clathrin-coated vesicle membrane. Its function is as follows. Subunit of the V1 complex of vacuolar(H+)-ATPase (V-ATPase), a multisubunit enzyme composed of a peripheral complex (V1) that hydrolyzes ATP and a membrane integral complex (V0) that translocates protons. V-ATPase is responsible for acidifying and maintaining the pH of intracellular compartments and in some cell types, is targeted to the plasma membrane, where it is responsible for acidifying the extracellular environment. The protein is V-type proton ATPase subunit E 1 (ATP6V1E1) of Homo sapiens (Human).